The following is a 298-amino-acid chain: Ketohexokinase (298 aa).

4 residues coordinate beta-D-fructose: Asp-15, Gly-41, Asn-42, and Asn-45. ATP contacts are provided by residues Arg-108, 226–229 (AEEG), and 255–258 (GAGD). Asp-258 contributes to the beta-D-fructose binding site.

It belongs to the carbohydrate kinase PfkB family. In terms of assembly, homodimer. In terms of tissue distribution, most abundant in liver, kidney, gut, spleen and pancreas. Low levels also found in adrenal, muscle, brain and eye.

The catalysed reaction is beta-D-fructose + ATP = beta-D-fructose 1-phosphate + ADP + H(+). It functions in the pathway carbohydrate metabolism; fructose metabolism. With respect to regulation, requires potassium. Inhibition by ADP. Functionally, catalyzes the phosphorylation of the ketose sugar fructose to fructose-1-phosphate. This is Ketohexokinase from Homo sapiens (Human).